The chain runs to 244 residues: uncharacterized protein (244 aa).

Transmembrane regions (helical) follow at residues 20–42, 49–67, 82–101, and 108–125; these read TITA…VVLI, FVYI…ATKV, TPSI…ASVF, and AFLV…ATPI.

It is found in the cell membrane. This is an uncharacterized protein from Archaeoglobus fulgidus (strain ATCC 49558 / DSM 4304 / JCM 9628 / NBRC 100126 / VC-16).